Here is a 398-residue protein sequence, read N- to C-terminus: Stabilizer of axonemal microtubules 2 (398 aa).

Mn stretches follow at residues 114–126 (STTF…PQEI), 148–162 (ITSH…QLEL), 248–260 (NSTS…PYQA), 282–296 (KSIM…ESCR), 316–328 (LSTF…PHEL), and 350–364 (VTMY…RQEI).

It belongs to the FAM154 family.

The protein is Stabilizer of axonemal microtubules 2 (SAXO2) of Homo sapiens (Human).